A 417-amino-acid polypeptide reads, in one-letter code: Dibenzothiophene monooxygenase (417 aa).

The helical N-terminus stretch occupies residues 19-125 (DPVAVARGLA…LYTQIAQNNW (107 aa)). Residues tyrosine 96, 129-134 (NASSEN), 159-163 (KHFCS), arginine 282, 369-370 (AR), and histidine 391 contribute to the FMN site. A central beta-barrel N-terminus region spans residues 126-234 (WTGNASSENN…VEPDEVLGAP (109 aa)). Residues 131–142 (SSENNSHELDVK) form a lid loop region. Positions 235 to 409 (NAFVLAFIQS…DVGKHTLNGQ (175 aa)) are helical C-terminus.

It belongs to the DszC flavin monooxygenase family. As to quaternary structure, homotetramer.

The protein localises to the cytoplasm. The enzyme catalyses dibenzothiophene + 2 FMNH2 + 2 O2 = dibenzothiophene 5,5-dioxide + 2 FMN + 2 H2O + 2 H(+). It catalyses the reaction dibenzothiophene + FMNH2 + O2 = dibenzothiophene 5-oxide + FMN + H2O + H(+). It carries out the reaction dibenzothiophene 5-oxide + FMNH2 + O2 = dibenzothiophene 5,5-dioxide + FMN + H2O + H(+). It functions in the pathway sulfur metabolism; dibenzothiophene degradation. In terms of biological role, catalyzes the first step of the '4S' desulfurization pathway that removes covalently bound sulfur from dibenzothiophene (DBT) without breaking carbon-carbon bonds. Sulfur dioxygenase which converts DBT to DBT-sulfone (DBTO2 or DBT 5,5-dioxide) in a stepwise manner. The chain is Dibenzothiophene monooxygenase from Rhodococcus erythropolis (Arthrobacter picolinophilus).